We begin with the raw amino-acid sequence, 207 residues long: A disintegrin and metalloproteinase with thrombospondin motifs 5 (207 aa).

Residues 1–74 form the Peptidase M12B domain; that stretch reads HAAFTVAHEI…GHGNCLLDLP (74 aa). His8 contributes to the Zn(2+) binding site. Residue Glu9 is part of the active site. 2 residues coordinate Zn(2+): His12 and His18. 5 cysteine pairs are disulfide-bonded: Cys24-Cys53, Cys95-Cys117, Cys106-Cys127, Cys112-Cys146, and Cys140-Cys151. In terms of domain architecture, Disintegrin spans 83–164; that stretch reads ELPGQTYDAS…TKKKYYSTSS (82 aa). Asn96 carries N-linked (GlcNAc...) asparagine glycosylation. Positions 165 to 205 constitute a TSP type-1 domain; the sequence is HGNWGSWGSWGQCSRSCGGGVQFAYRHCNNPAPKNNGRYCT. C-linked (Man) tryptophan glycans are attached at residues Trp168 and Trp171. The O-linked (Fuc...) serine glycan is linked to Ser180.

Zn(2+) is required as a cofactor. The precursor is cleaved by furin and PCSK7 outside of the cell. Post-translationally, glycosylated. Can be O-fucosylated by POFUT2 on a serine or a threonine residue found within the consensus sequence C1-X(2)-(S/T)-C2-G of the TSP type-1 repeat domains where C1 and C2 are the first and second cysteine residue of the repeat, respectively. Fucosylated repeats can then be further glycosylated by the addition of a beta-1,3-glucose residue by the glucosyltransferase, B3GALTL. Fucosylation mediates the efficient secretion of ADAMTS family members. Can also be C-glycosylated with one or two mannose molecules on tryptophan residues within the consensus sequence W-X-X-W of the TPRs, and N-glycosylated. These other glycosylations can also facilitate secretion.

It localises to the secreted. It is found in the extracellular space. The protein localises to the extracellular matrix. In terms of biological role, metalloproteinase that plays an important role in connective tissue organization, development, inflammation and cell migration. Extracellular matrix (ECM) degrading enzyme that shows proteolytic activity toward the hyalectan group of chondroitin sulfate proteoglycans (CSPGs) including ACAN, VCAN, BCAN and NCAN. Cleavage within the hyalectans occurs at Glu-Xaa recognition motifs. Plays a role in embryonic development, including limb and cardiac morphogenesis, and skeletal muscle development through its VCAN remodeling properties. Cleaves VCAN in the pericellular matrix surrounding myoblasts, facilitating myoblast contact and fusion which is required for skeletal muscle development and regeneration. Participates in the development of brown adipose tissue and browning of white adipose tissue. Plays an important role for T-lymphocyte migration from draining lymph nodes following viral infection. The chain is A disintegrin and metalloproteinase with thrombospondin motifs 5 (ADAMTS5) from Bos taurus (Bovine).